Reading from the N-terminus, the 483-residue chain is GTPase Der (483 aa).

2 EngA-type G domains span residues Phe-3–Arg-167 and Leu-212–Asn-387. GTP is bound by residues Gly-9–Ser-16, Asp-56–Leu-60, Asn-119–Glu-122, Gly-218–Ser-225, Asp-265–Met-269, and Asn-330–Asp-333. The region spanning Arg-388 to Asp-472 is the KH-like domain.

Belongs to the TRAFAC class TrmE-Era-EngA-EngB-Septin-like GTPase superfamily. EngA (Der) GTPase family. In terms of assembly, associates with the 50S ribosomal subunit.

In terms of biological role, GTPase that plays an essential role in the late steps of ribosome biogenesis. This Brucella melitensis biotype 2 (strain ATCC 23457) protein is GTPase Der.